The primary structure comprises 85 residues: Kappa-theraphotoxin-Gr1a (85 aa).

The first 21 residues, Met-1 to Gly-21, serve as a signal peptide directing secretion. The propeptide occupies Ser-22–Arg-49. Cystine bridges form between Cys-51-Cys-65, Cys-58-Cys-70, and Cys-64-Cys-77. Residues Tyr-53–Phe-55 form an involved in active face region.

The protein belongs to the neurotoxin 10 (Hwtx-1) family. 09 (HaTx) subfamily. As to expression, expressed by the venom gland.

Its subcellular location is the secreted. Its function is as follows. Inhibits Kv2.1/KCNB1 and Kv4.2/KCND2 voltage-gated potassium channels. Acts as a gating modifier by shifting channel openings to more depolarized voltages and acts via the occupancy of multiple binding sites on the channel. The toxin binding sites are situated on the S3-S4 extracellular linker of the channel. At least two hanatoxin molecules can occupy the Kv2.1/KCNB1 channel, and maybe more (three or four). Can also inhibit calcium channels (Cav2.1/CACNA1A). Needs to partition into the membrane in order to bind to the channel. This is Kappa-theraphotoxin-Gr1a from Grammostola rosea (Chilean rose tarantula).